Consider the following 290-residue polypeptide: Fructose-1,6-bisphosphatase class 1 (290 aa).

Positions 78, 96, 98, and 99 each coordinate Mg(2+). Residues 99–102 (DGSS), Tyr201, and Lys226 contribute to the substrate site. Glu232 contributes to the Mg(2+) binding site.

Belongs to the FBPase class 1 family. Homotetramer. Requires Mg(2+) as cofactor.

It is found in the cytoplasm. It catalyses the reaction beta-D-fructose 1,6-bisphosphate + H2O = beta-D-fructose 6-phosphate + phosphate. It functions in the pathway carbohydrate biosynthesis; gluconeogenesis. The chain is Fructose-1,6-bisphosphatase class 1 from Helicobacter pylori (strain HPAG1).